A 433-amino-acid chain; its full sequence is 26S proteasome regulatory subunit 7 (433 aa).

Residues 1 to 22 (MPDYLGADQRKTKEDEKDDKPI) form a disordered region. The segment covering 8 to 22 (DQRKTKEDEKDDKPI) has biased composition (basic and acidic residues). Lysine 116 is modified (N6-acetyllysine). Residue 216–223 (GPPGTGKT) participates in ATP binding. Position 422 is an N6-acetyllysine (lysine 422).

This sequence belongs to the AAA ATPase family. In terms of assembly, component of the 19S proteasome regulatory particle complex. The 26S proteasome consists of a 20S core particle (CP) and two 19S regulatory subunits (RP). The regulatory particle is made of a lid composed of 9 subunits, a base containing 6 ATPases including PSMC2 and few additional components. Interacts with NDC80/HEC; this interaction is detected only during M phase. Interacts and SQSTM1. Interacts with PAAF1. Directly interacts with TRIM5. In terms of processing, monoubiquitinated by RNF181. Phosphorylated. Dephosphorylated by UBLCP1 which impairs PSMC2 ATPase activity and disrupts 26S proteasome assembly.

It localises to the cytoplasm. The protein resides in the nucleus. Its function is as follows. Component of the 26S proteasome, a multiprotein complex involved in the ATP-dependent degradation of ubiquitinated proteins. This complex plays a key role in the maintenance of protein homeostasis by removing misfolded or damaged proteins, which could impair cellular functions, and by removing proteins whose functions are no longer required. Therefore, the proteasome participates in numerous cellular processes, including cell cycle progression, apoptosis, or DNA damage repair. PSMC2 belongs to the heterohexameric ring of AAA (ATPases associated with diverse cellular activities) proteins that unfolds ubiquitinated target proteins that are concurrently translocated into a proteolytic chamber and degraded into peptides. This Pongo abelii (Sumatran orangutan) protein is 26S proteasome regulatory subunit 7 (PSMC2).